The primary structure comprises 115 residues: Large ribosomal subunit protein bL19 (115 aa).

Belongs to the bacterial ribosomal protein bL19 family.

Its function is as follows. This protein is located at the 30S-50S ribosomal subunit interface and may play a role in the structure and function of the aminoacyl-tRNA binding site. The chain is Large ribosomal subunit protein bL19 from Streptococcus equi subsp. equi (strain 4047).